Consider the following 296-residue polypeptide: Phosphoribosylaminoimidazole-succinocarboxamide synthase (296 aa).

The protein belongs to the SAICAR synthetase family.

It carries out the reaction 5-amino-1-(5-phospho-D-ribosyl)imidazole-4-carboxylate + L-aspartate + ATP = (2S)-2-[5-amino-1-(5-phospho-beta-D-ribosyl)imidazole-4-carboxamido]succinate + ADP + phosphate + 2 H(+). Its pathway is purine metabolism; IMP biosynthesis via de novo pathway; 5-amino-1-(5-phospho-D-ribosyl)imidazole-4-carboxamide from 5-amino-1-(5-phospho-D-ribosyl)imidazole-4-carboxylate: step 1/2. This is Phosphoribosylaminoimidazole-succinocarboxamide synthase from Desulfotalea psychrophila (strain LSv54 / DSM 12343).